Here is a 341-residue protein sequence, read N- to C-terminus: Eukaryotic translation initiation factor 3 subunit I (341 aa).

WD repeat units follow at residues 8-47 (GHER…RLGT), 56-95 (GHNG…CLYT), 151-190 (LSGS…EVQA), 194-233 (EHSA…VMKV), 235-274 (TTET…GKFE), and 291-331 (GHFG…RSRP).

This sequence belongs to the eIF-3 subunit I family. Component of the eukaryotic translation initiation factor 3 (eIF-3) complex.

It is found in the cytoplasm. Functionally, component of the eukaryotic translation initiation factor 3 (eIF-3) complex, which is involved in protein synthesis of a specialized repertoire of mRNAs and, together with other initiation factors, stimulates binding of mRNA and methionyl-tRNAi to the 40S ribosome. The eIF-3 complex specifically targets and initiates translation of a subset of mRNAs involved in cell proliferation. In Cryptococcus neoformans var. neoformans serotype D (strain B-3501A) (Filobasidiella neoformans), this protein is Eukaryotic translation initiation factor 3 subunit I.